Reading from the N-terminus, the 135-residue chain is Flagellar assembly factor FliW 1 (135 aa).

It belongs to the FliW family. Interacts with translational regulator CsrA and flagellin(s).

Its subcellular location is the cytoplasm. Acts as an anti-CsrA protein, binds CsrA and prevents it from repressing translation of its target genes, one of which is flagellin. Binds to flagellin and participates in the assembly of the flagellum. This is Flagellar assembly factor FliW 1 from Helicobacter pylori (strain ATCC 700392 / 26695) (Campylobacter pylori).